The sequence spans 212 residues: uncharacterized protein (212 aa).

This is an uncharacterized protein from Dryophytes versicolor (chameleon treefrog).